Here is a 473-residue protein sequence, read N- to C-terminus: H(+)/Cl(-) exchange transporter ClcA (473 aa).

The Cytoplasmic segment spans residues 1–32 (MKTDTSTFLAQQIVRLRRRDQIRRLMQRDKTP). A helical membrane pass occupies residues 33 to 69 (LAILFMAAVVGTLTGLVGVAFEKAVSWVQNMRIGALV). Topologically, residues 70-76 (QVADHAF) are periplasmic. The helical transmembrane segment at 77–100 (LLWPLAFILSALLAMVGYFLVRKF) threads the bilayer. Positions 106–110 (GSGIP) match the Selectivity filter part_1 motif. Ser107 contributes to the chloride binding site. Positions 109 to 116 (IPEIEGAL) form an intramembrane region, helical. Topologically, residues 117–123 (EELRPVR) are cytoplasmic. The next 2 membrane-spanning stretches (helical) occupy residues 124 to 141 (WWRV…TLGA) and 148 to 166 (EGPT…LDVF). The short motif at 146–150 (GREGP) is the Selectivity filter part_2 element. Residues 167 to 176 (RMRSAEARHT) are Cytoplasmic-facing. Intramembrane regions (helical) lie at residues 177 to 189 (LLAT…LSAA) and 193 to 201 (PLAGILFII). Residues 202 to 214 (EEMRPQFRYNLIS) lie on the Cytoplasmic side of the membrane. The helical transmembrane segment at 215-232 (IKAVFTGVIMSSIVFRIF) threads the bilayer. Residues 233–252 (NGEAPIIEVGKLSDAPVNTL) are Periplasmic-facing. Residues 253 to 281 (WLYLILGIIFGCVGPVFNSLVLRTQDMFQ) traverse the membrane as a helical segment. Topologically, residues 282 to 287 (RFHGGE) are cytoplasmic. The chain crosses the membrane as a helical span at residues 288–309 (IKKWVLMGGAIGGLCGILGLIE). The Periplasmic segment spans residues 310-329 (PEAAGGGFNLIPIAAAGNFS). Helical transmembrane passes span 330–349 (VGLL…LCFS) and 355–376 (GIFA…MAAA). Residues 355–359 (GIFAP) carry the Selectivity filter part_3 motif. 2 residues coordinate chloride: Ile356 and Phe357. Over 377 to 386 (VLFPQYHLEA) the chain is Periplasmic. Positions 387 to 401 (GTFAIAGMGALMAAS) form an intramembrane region, helical. The note=Loop between two helices intramembrane region spans 402-404 (VRA). An intramembrane region (helical) is located at residues 405-416 (PLTGIVLVLEMT). Positions 417-421 (DNYQL) form an intramembrane region, note=Loop between two helices. A helical transmembrane segment spans residues 422-438 (ILPMIITCLGATLLAQF). At 439–473 (LGGKPLYSTILARTLAKQDAEQAAKNQNASAGENT) the chain is on the cytoplasmic side. Tyr445 contacts chloride.

The protein belongs to the chloride channel (TC 2.A.49) family. ClcA subfamily. Homodimer.

It is found in the cell inner membrane. The enzyme catalyses 2 chloride(in) + H(+)(out) = 2 chloride(out) + H(+)(in). Its function is as follows. Proton-coupled chloride transporter. Functions as antiport system and exchanges two chloride ions for 1 proton. Probably acts as an electrical shunt for an outwardly-directed proton pump that is linked to amino acid decarboxylation, as part of the extreme acid resistance (XAR) response. In Salmonella choleraesuis (strain SC-B67), this protein is H(+)/Cl(-) exchange transporter ClcA.